The sequence spans 109 residues: SRA stem-loop-interacting RNA-binding protein, mitochondrial (109 aa).

The residue at position 15 (serine 15) is a Phosphoserine. The RRM domain maps to 19 to 103; it reads PVAFVRRIPW…RRPKLPQTSD (85 aa). Threonine 101 carries the post-translational modification Phosphothreonine. Residue serine 102 is modified to Phosphoserine.

In terms of tissue distribution, ubiquitously expressed, with highest level in heart, liver, skeletal muscle and testis.

It localises to the mitochondrion. The protein resides in the nucleus. RNA-binding protein that acts as a nuclear receptor corepressor. Probably acts by binding the SRA RNA, and repressing the SRA-mediated nuclear receptor coactivation. Binds the STR7 loop of SRA RNA. Also able to repress glucocorticoid (GR), androgen (AR), thyroid (TR) and VDR-mediated transactivation. This is SRA stem-loop-interacting RNA-binding protein, mitochondrial (SLIRP) from Homo sapiens (Human).